The chain runs to 464 residues: ATP-dependent protease ATPase subunit HslU (464 aa).

Residues isoleucine 19, 61–66 (GVGKTE), aspartate 277, glutamate 342, and arginine 414 each bind ATP.

This sequence belongs to the ClpX chaperone family. HslU subfamily. In terms of assembly, a double ring-shaped homohexamer of HslV is capped on each side by a ring-shaped HslU homohexamer. The assembly of the HslU/HslV complex is dependent on binding of ATP.

It localises to the cytoplasm. ATPase subunit of a proteasome-like degradation complex; this subunit has chaperone activity. The binding of ATP and its subsequent hydrolysis by HslU are essential for unfolding of protein substrates subsequently hydrolyzed by HslV. HslU recognizes the N-terminal part of its protein substrates and unfolds these before they are guided to HslV for hydrolysis. The sequence is that of ATP-dependent protease ATPase subunit HslU from Lactobacillus johnsonii (strain CNCM I-12250 / La1 / NCC 533).